Consider the following 192-residue polypeptide: Xanthine phosphoribosyltransferase (192 aa).

Residues L20 and N27 each contribute to the xanthine site. 128-132 contributes to the 5-phospho-alpha-D-ribose 1-diphosphate binding site; the sequence is ADGEA. K156 is a binding site for xanthine.

The protein belongs to the purine/pyrimidine phosphoribosyltransferase family. Xpt subfamily. As to quaternary structure, homodimer.

Its subcellular location is the cytoplasm. The catalysed reaction is XMP + diphosphate = xanthine + 5-phospho-alpha-D-ribose 1-diphosphate. Its pathway is purine metabolism; XMP biosynthesis via salvage pathway; XMP from xanthine: step 1/1. Functionally, converts the preformed base xanthine, a product of nucleic acid breakdown, to xanthosine 5'-monophosphate (XMP), so it can be reused for RNA or DNA synthesis. The sequence is that of Xanthine phosphoribosyltransferase from Agathobacter rectalis (strain ATCC 33656 / DSM 3377 / JCM 17463 / KCTC 5835 / VPI 0990) (Eubacterium rectale).